The primary structure comprises 253 residues: DNA repair protein RecO (253 aa).

It belongs to the RecO family.

Functionally, involved in DNA repair and RecF pathway recombination. The sequence is that of DNA repair protein RecO from Dehalococcoides mccartyi (strain CBDB1).